The chain runs to 151 residues: 3-hydroxyacyl-[acyl-carrier-protein] dehydratase FabZ (151 aa).

Histidine 52 is a catalytic residue.

Belongs to the thioester dehydratase family. FabZ subfamily.

The protein localises to the cytoplasm. It carries out the reaction a (3R)-hydroxyacyl-[ACP] = a (2E)-enoyl-[ACP] + H2O. In terms of biological role, involved in unsaturated fatty acids biosynthesis. Catalyzes the dehydration of short chain beta-hydroxyacyl-ACPs and long chain saturated and unsaturated beta-hydroxyacyl-ACPs. This Lactococcus lactis subsp. lactis (strain IL1403) (Streptococcus lactis) protein is 3-hydroxyacyl-[acyl-carrier-protein] dehydratase FabZ (fabZ1).